Here is a 330-residue protein sequence, read N- to C-terminus: uncharacterized protein (330 aa).

The protein belongs to the ornithine cyclodeaminase/mu-crystallin family.

It is found in the cytoplasm. This is an uncharacterized protein from Schizosaccharomyces pombe (strain 972 / ATCC 24843) (Fission yeast).